The chain runs to 891 residues: MSGVNEIRSTFLDYFRDAGHAVVPSSSLVPKNDPTLMFTNAGMVQFKNVFTGVEKRPYVKATSSQKCVRAGGKHNDLDNVGYTARHHTFFEMLGNFSFGDYFKADAIELAWTLITKEFGLTPERLLVTVYADDDEAAGLWKKIAGFGDDKIIRIGTSDNFWQMGDTGPCGPCSEIFIDQGPALAGGPPGSPDEDGDRFLEFWNLVFMQYEQVEPGVRNPLPRPSIDTGMGLERMAAILQGVHSNYDTDLFRALIDAVAHAVSRAPEPATRASYRVIADHLRSTSFLIADGVLPSNEGRGYVLRRIMRRAMRHLELLGARDPVMYRLVPTLVREMGRAFPELVRSEALISETLRLEEGRFRKTLERGLAILDAESRDLSAGQNLSGETAFTLYDTYGFPLDLTQDALKARGIGVDTQAFDAAMQRQKQAARAAWQGSGEAATETVWFGIKERTGATEFLGYETETAEAVVGALLREGGEVETLKAGDSGIVVVNQTPFYGESGGQVGDTGTISGPGLKARVTNTEKKLGDLFVHHVTVEEGTLSLGAAVELKVDHARRSAIRANHSATHLLHEALRQVLGDHVAQKGSLVAPERLRFDISHPKPIDEAELTRVEEIANAVLLQNAPVVTKLMAVDEAIESGARALFGEKYGDEVRVVSMGRPVDDEGWEVEGRLPNFSIELCGGTHVSQLGEIGQITVIGESAVGAGVRRIEAMTGTAARRHRATESRTLSQLAGLLKAPVADVPERLSTLIEERRRLEKELADARKKIAMGGASGGGDEAREVNGVRLMARVVEGVEMRDLKGLADEGKSRLGSGIVAIVGVSADGKAGLVVGVTEDLTGRYDAVGLVRAGAGHLGGKGGGGRRDMAQAGGPDGHGAEAALAAIAEALAAA.

Zn(2+) is bound by residues histidine 564, histidine 568, cysteine 681, and histidine 685.

It belongs to the class-II aminoacyl-tRNA synthetase family. The cofactor is Zn(2+).

The protein resides in the cytoplasm. The enzyme catalyses tRNA(Ala) + L-alanine + ATP = L-alanyl-tRNA(Ala) + AMP + diphosphate. In terms of biological role, catalyzes the attachment of alanine to tRNA(Ala) in a two-step reaction: alanine is first activated by ATP to form Ala-AMP and then transferred to the acceptor end of tRNA(Ala). Also edits incorrectly charged Ser-tRNA(Ala) and Gly-tRNA(Ala) via its editing domain. The polypeptide is Alanine--tRNA ligase (Methylorubrum populi (strain ATCC BAA-705 / NCIMB 13946 / BJ001) (Methylobacterium populi)).